The following is a 436-amino-acid chain: Adenine nucleotide transporter BT1, chloroplastic/amyloplastic/mitochondrial (436 aa).

The segment at Ala-83 to Pro-135 is disordered. 3 Solcar repeats span residues Gln-132–Phe-216, Ile-227–Leu-311, and Val-324–Ile-412. 6 helical membrane passes run Arg-137 to Ile-158, Ala-193 to Ala-213, Ile-229 to Thr-247, Ser-290 to Arg-310, Val-327 to Leu-347, and Leu-384 to Cys-405. Over residues Glu-417–Gly-428 the composition is skewed to acidic residues. The tract at residues Glu-417 to Glu-436 is disordered.

It belongs to the mitochondrial carrier (TC 2.A.29) family. In terms of tissue distribution, highly expressed in silks and endosperm of developing kernels. Expressed at intermediate levels in tassels and lower levels in stems and leaves.

The protein localises to the plastid. It localises to the chloroplast inner membrane. Its subcellular location is the amyloplast inner membrane. The protein resides in the mitochondrion inner membrane. Inhibited by mersalyl. Functionally, probable adenylate translocator that mediates transport of ADP-glucose into endosperm storage plastids during starch synthesis. Transports cytosolic ADP-glucose to amyloplast stroma by counter-exchange with ADP. The protein is Adenine nucleotide transporter BT1, chloroplastic/amyloplastic/mitochondrial (BT1) of Zea mays (Maize).